A 611-amino-acid chain; its full sequence is Putative pentatricopeptide repeat-containing protein At1g56570 (611 aa).

13 PPR repeats span residues 44 to 74 (HHIL…MPDR), 75 to 109 (DVVA…GTSP), 110 to 144 (NEFT…GMEG), 145 to 176 (SLYV…IKVK), 177 to 211 (NDVT…NAEV), 212 to 246 (TPYC…GFQS), 247 to 281 (NLPV…DLIT), 282 to 311 (WNTL…GFVP), 312 to 346 (NCYT…GFNK), 347 to 377 (NVEL…IVDR), 379 to 413 (NLVS…GIRP), 414 to 444 (DRIV…MESE), and 450 to 480 (DRDI…MPFK). Positions 485–561 (TWGAILGACK…EAGMSWILVE (77 aa)) are type E motif. The type E(+) motif stretch occupies residues 562–592 (NQVFSFAVSDKMCPNASSVYSVLGLLIEETR).

Belongs to the PPR family. PCMP-E subfamily.

This chain is Putative pentatricopeptide repeat-containing protein At1g56570 (PCMP-E64), found in Arabidopsis thaliana (Mouse-ear cress).